Consider the following 214-residue polypeptide: Large ribosomal subunit protein uL3 (214 aa).

The tract at residues 133–155 (ATHGNSRSHRVPGSTGQCQSPGR) is disordered. Gln151 bears the N5-methylglutamine mark.

It belongs to the universal ribosomal protein uL3 family. As to quaternary structure, part of the 50S ribosomal subunit. Forms a cluster with proteins L14 and L19. Post-translationally, methylated by PrmB.

Its function is as follows. One of the primary rRNA binding proteins, it binds directly near the 3'-end of the 23S rRNA, where it nucleates assembly of the 50S subunit. This Cellvibrio japonicus (strain Ueda107) (Pseudomonas fluorescens subsp. cellulosa) protein is Large ribosomal subunit protein uL3.